The sequence spans 564 residues: Protein glycosylation K (564 aa).

Residues 1 to 15 (MLKKLFFILSKEDKN) are Cytoplasmic-facing. A helical transmembrane segment spans residues 16–38 (FLFFLLVFSVFISFIETFAISLV). The 303-residue stretch at 17–319 (LFFLLVFSVF…IITSYHDLLY (303 aa)) folds into the ABC transmembrane type-1 domain. Over 39–76 (MPFITLASDFSYFDRNKYLISLKEYLNIPVFEIIVYFG) the chain is Extracellular. The tract at residues 46-67 (SDFSYFDRNKYLISLKEYLNIP) is important for stimulation of ATPase activity by lipid-linked oligosaccharides and subsequent translocation of lipid-linked oligosaccharides. The helical transmembrane segment at 77-98 (VGLIVFYVFRALLNAYYFHLLA) threads the bilayer. Over 99–149 (RFSKGRYHAIAYKVFSKFLNINYEKFTQKNQSEILKSITGEVYNLSTMISS) the chain is Cytoplasmic. The chain crosses the membrane as a helical span at residues 150–170 (FLLLMSEIFVVLLLYALMLLI). Topologically, residues 171-173 (NYK) are extracellular. The chain crosses the membrane as a helical span at residues 174–197 (ITLFLSIFMVLNAFILVKILSPII). At 198 to 254 (KKAGVRREEAMKNFFEILNTNLNNFKFIKLKTKEDGVLSLFKAQSEAFSKANITNES) the chain is on the cytoplasmic side. The chain crosses the membrane as a helical span at residues 255-276 (VAAVPRIYLEGIGFCVLVFIVV). Over 277–292 (FLVLKNESDISGILST) the chain is Extracellular. A helical transmembrane segment spans residues 293–314 (ISIFVLALYRLMPSANRIITSY). At 315–564 (HDLLYYHSSL…LEHGKLKEEK (250 aa)) the chain is on the cytoplasmic side. Positions 349–564 (LKICNLSFGY…LEHGKLKEEK (216 aa)) constitute an ABC transporter domain. Residue 382-389 (GESGCGKS) coordinates ATP.

Belongs to the ABC transporter superfamily. In terms of assembly, homodimer; domain-swapped. Helices that arise in transmembrane regions 4 and 5 from one subunit cross over and contact the nucleotide-binding domain from the other subunit.

The protein resides in the cell inner membrane. The enzyme catalyses ATP + H2O + lipopolysaccharideSide 1 = ADP + phosphate + lipopolysaccharideSide 2.. The protein operates within protein modification; protein glycosylation. Functionally, mediates the ATP-dependent translocation of the undecaprenylpyrophosphate-linked heptasaccharide intermediate across the cell membrane; this is an essential step during the N-linked protein glycosylation pathway. Transport across the membrane is effected via ATP-driven conformation changes. Most likely, only the polar and charged part of the glycolipid enter the substrate-binding cavity, and the lipid tail remains exposed to the membrane lipids during the transmembrane flipping process. This is Protein glycosylation K (pglK) from Campylobacter jejuni subsp. jejuni serotype O:2 (strain ATCC 700819 / NCTC 11168).